Consider the following 143-residue polypeptide: MKIKIIKLTESAQVPRYSHADDAGLDLFAIEAQKILPGASALIPTGIAIELPQGTEAQVRPRSGLALKHSITVLNSPGTIDAGYRGEIGVILINHGQETFQVVEGMKIAQMVIAPIMRAEIEEVTELSATQRGEGGFGSTGYA.

Substrate-binding positions include 62–64 (RSG), Asn-75, and 79–81 (TID).

Belongs to the dUTPase family. Mg(2+) is required as a cofactor.

The enzyme catalyses dUTP + H2O = dUMP + diphosphate + H(+). The protein operates within pyrimidine metabolism; dUMP biosynthesis; dUMP from dCTP (dUTP route): step 2/2. Its function is as follows. This enzyme is involved in nucleotide metabolism: it produces dUMP, the immediate precursor of thymidine nucleotides and it decreases the intracellular concentration of dUTP so that uracil cannot be incorporated into DNA. This chain is Deoxyuridine 5'-triphosphate nucleotidohydrolase, found in Acaryochloris marina (strain MBIC 11017).